A 339-amino-acid polypeptide reads, in one-letter code: D-erythrose-4-phosphate dehydrogenase (339 aa).

Residues 12-13 and R81 contribute to the NAD(+) site; that span reads RI. Substrate contacts are provided by residues 154–156, R200, 213–214, and R236; these read SCT and TK. C155 functions as the Nucleophile in the catalytic mechanism. N318 serves as a coordination point for NAD(+).

As to quaternary structure, homotetramer.

The protein localises to the cytoplasm. It catalyses the reaction D-erythrose 4-phosphate + NAD(+) + H2O = 4-phospho-D-erythronate + NADH + 2 H(+). It participates in cofactor biosynthesis; pyridoxine 5'-phosphate biosynthesis; pyridoxine 5'-phosphate from D-erythrose 4-phosphate: step 1/5. In terms of biological role, catalyzes the NAD-dependent conversion of D-erythrose 4-phosphate to 4-phosphoerythronate. The sequence is that of D-erythrose-4-phosphate dehydrogenase (epd) from Escherichia coli (strain K12).